The sequence spans 390 residues: tRNA(Met) cytidine acetate ligase (390 aa).

ATP-binding positions include 7–20, glycine 101, asparagine 162, and arginine 187; that span reads VVEY…HKLH.

The protein belongs to the TmcAL family.

The protein localises to the cytoplasm. The enzyme catalyses cytidine(34) in elongator tRNA(Met) + acetate + ATP = N(4)-acetylcytidine(34) in elongator tRNA(Met) + AMP + diphosphate. Functionally, catalyzes the formation of N(4)-acetylcytidine (ac(4)C) at the wobble position of elongator tRNA(Met), using acetate and ATP as substrates. First activates an acetate ion to form acetyladenylate (Ac-AMP) and then transfers the acetyl group to tRNA to form ac(4)C34. The polypeptide is tRNA(Met) cytidine acetate ligase (Listeria monocytogenes serotype 4b (strain F2365)).